The chain runs to 99 residues: Signal recognition particle 19 kDa protein (99 aa).

This sequence belongs to the SRP19 family. In terms of assembly, part of the signal recognition particle protein translocation system, which is composed of SRP and FtsY. Archaeal SRP consists of a 7S RNA molecule of 300 nucleotides and two protein subunits: SRP54 and SRP19.

The protein resides in the cytoplasm. Involved in targeting and insertion of nascent membrane proteins into the cytoplasmic membrane. Binds directly to 7S RNA and mediates binding of the 54 kDa subunit of the SRP. The chain is Signal recognition particle 19 kDa protein from Pyrococcus horikoshii (strain ATCC 700860 / DSM 12428 / JCM 9974 / NBRC 100139 / OT-3).